A 466-amino-acid polypeptide reads, in one-letter code: Lipase 2 (466 aa).

Residues 1–16 form the signal peptide; sequence MKGLVFLLGLLPTIYA. Residues Cys-112 and Cys-285 are joined by a disulfide bond. Ser-196 acts as the Charge relay system in catalysis. N-linked (GlcNAc...) asparagine glycosylation is found at Asn-231, Asn-319, and Asn-331. Active-site charge relay system residues include Asp-348 and His-381. The cysteines at positions 364 and 409 are disulfide-linked. N-linked (GlcNAc...) asparagine glycans are attached at residues Asn-422 and Asn-451.

The protein belongs to the AB hydrolase superfamily. Lipase family. Class Lip subfamily.

The protein resides in the secreted. It carries out the reaction a triacylglycerol + H2O = a diacylglycerol + a fatty acid + H(+). Its function is as follows. Secreted lipase that is able to hydrolyze both the neutral triacylglycerols and the monopalmitate ester Tween 40, allowing the use of hydrolyzed products as carbon sources. Has broad lipolytic activity, which may be important for colonization and subsequent infection, therefore contributing to the persistence and virulence in human tissue. My be important for alimentary tract colonization, but not oral infection. Facilitates invasive disease via lipid-based suppression of the IL-17 response. Inhibits IL-17 production indirectly by suppressing IL-23 production by tissue-resident dendritic cells. This is Lipase 2 from Candida albicans (strain SC5314 / ATCC MYA-2876) (Yeast).